The following is a 287-amino-acid chain: 4,4'-diapophytoene synthase (287 aa).

(2E,6E)-farnesyl diphosphate-binding positions include 18 to 21, Tyr41, and Arg45; that span reads HSKS. Positions 48 and 52 each coordinate Mg(2+). Gln165 provides a ligand contact to (2E,6E)-farnesyl diphosphate. Asn168 contributes to the Mg(2+) binding site. Arg171 contributes to the (2E,6E)-farnesyl diphosphate binding site. Asp172 is a Mg(2+) binding site. Tyr248 is a binding site for (2E,6E)-farnesyl diphosphate.

The protein belongs to the phytoene/squalene synthase family. CrtM subfamily. Requires Mg(2+) as cofactor.

It catalyses the reaction 2 (2E,6E)-farnesyl diphosphate = 15-cis-4,4'-diapophytoene + 2 diphosphate. It participates in carotenoid biosynthesis; staphyloxanthin biosynthesis; staphyloxanthin from farnesyl diphosphate: step 1/5. Functionally, involved in the biosynthesis of the yellow-orange carotenoid staphyloxanthin, which plays a role in the virulence via its protective function against oxidative stress. Catalyzes the head-to-head condensation of two molecules of farnesyl diphosphate (FPP) into the colorless C(30) carotenoid 4,4'-diapophytoene (dehydrosqualene). In Staphylococcus aureus, this protein is 4,4'-diapophytoene synthase.